The primary structure comprises 197 residues: Large ribosomal subunit protein uL10 (197 aa).

Positions 162-197 (GGASAPAAEEAPAAEEAAAEEVAAPAEAAEAATEEN) are disordered. A compositionally biased stretch (low complexity) spans 163 to 197 (GASAPAAEEAPAAEEAAAEEVAAPAEAAEAATEEN).

It belongs to the universal ribosomal protein uL10 family. In terms of assembly, part of the ribosomal stalk of the 50S ribosomal subunit. The N-terminus interacts with L11 and the large rRNA to form the base of the stalk. The C-terminus forms an elongated spine to which L12 dimers bind in a sequential fashion forming a multimeric L10(L12)X complex.

Forms part of the ribosomal stalk, playing a central role in the interaction of the ribosome with GTP-bound translation factors. The polypeptide is Large ribosomal subunit protein uL10 (Paenarthrobacter aurescens (strain TC1)).